Consider the following 146-residue polypeptide: Copper transporter 5 (146 aa).

The chain crosses the membrane as a helical span at residues 24–44; that stretch reads WLSYILTLIACFVFSAFYQYL. Positions 55-74 are disordered; sequence SSSRRAPPPPRSSSGVSAPL. A helical transmembrane segment spans residues 101 to 121; the sequence is LLMLAAMSFNGGVFIAIVVGL.

The protein belongs to the copper transporter (Ctr) (TC 1.A.56) family. SLC31A subfamily. As to expression, highly expressed in leaves and stems and at lower levels in roots and flowers.

It is found in the membrane. In terms of biological role, involved in the transport of copper. The chain is Copper transporter 5 (COPT5) from Arabidopsis thaliana (Mouse-ear cress).